Consider the following 412-residue polypeptide: CapZ-interacting protein (412 aa).

Disordered regions lie at residues 1 to 84 (MEER…KSSP) and 99 to 412 (ALLP…DTRM). Over residues 7 to 20 (ETNSNVDSSAQPSV) the composition is skewed to polar residues. Phosphoserine occurs at positions 68, 82, 83, 105, 108, 116, 120, and 123. Residue Thr-124 is modified to Phosphothreonine. Phosphoserine occurs at positions 126, 127, 135, and 143. Residues 159–176 (VRTRGSIKRRPPSRRFRR) show a composition bias toward basic residues. Ser-177, Ser-179, and Ser-216 each carry phosphoserine. Phosphothreonine is present on residues Thr-243 and Thr-256. The span at 248 to 258 (EKPEELVRTPE) shows a compositional bias: basic and acidic residues. Phosphoserine is present on Ser-297. Basic and acidic residues-rich tracts occupy residues 298–312 (PREE…DTGK) and 319–330 (SEERVADEDRLG). Residues Ser-333 and Ser-401 each carry the phosphoserine modification.

Interacts with CAPZA2 and CAPZB. In terms of processing, dephosphorylation results in its dissociation from CAPZA2.

In terms of biological role, stress-induced phosphorylation of CAPZIP may regulate the ability of F-actin-capping protein to remodel actin filament assembly. The chain is CapZ-interacting protein (Rcsd1) from Mus musculus (Mouse).